A 333-amino-acid chain; its full sequence is Glycerol-3-phosphate dehydrogenase [NAD(P)+] (333 aa).

Positions 10, 11, and 105 each coordinate NADPH. Sn-glycerol 3-phosphate contacts are provided by K105, G136, and T138. A140 contributes to the NADPH binding site. Positions 191, 244, 254, 255, and 256 each coordinate sn-glycerol 3-phosphate. Residue K191 is the Proton acceptor of the active site. R255 is an NADPH binding site. NADPH-binding residues include V279 and E281.

It belongs to the NAD-dependent glycerol-3-phosphate dehydrogenase family.

It is found in the cytoplasm. It carries out the reaction sn-glycerol 3-phosphate + NAD(+) = dihydroxyacetone phosphate + NADH + H(+). The enzyme catalyses sn-glycerol 3-phosphate + NADP(+) = dihydroxyacetone phosphate + NADPH + H(+). It functions in the pathway membrane lipid metabolism; glycerophospholipid metabolism. Its function is as follows. Catalyzes the reduction of the glycolytic intermediate dihydroxyacetone phosphate (DHAP) to sn-glycerol 3-phosphate (G3P), the key precursor for phospholipid synthesis. The sequence is that of Glycerol-3-phosphate dehydrogenase [NAD(P)+] from Syntrophotalea carbinolica (strain DSM 2380 / NBRC 103641 / GraBd1) (Pelobacter carbinolicus).